The sequence spans 335 residues: Nucleoid-associated protein CKO_00588 (335 aa).

Belongs to the YejK family.

Its subcellular location is the cytoplasm. The protein localises to the nucleoid. The sequence is that of Nucleoid-associated protein CKO_00588 from Citrobacter koseri (strain ATCC BAA-895 / CDC 4225-83 / SGSC4696).